The following is a 138-amino-acid chain: Acidic phospholipase A2 PePLA2 (138 aa).

Positions Met-1–Gly-16 are cleaved as a signal peptide. Disulfide bonds link Cys-42-Cys-131, Cys-44-Cys-60, Cys-59-Cys-110, Cys-65-Cys-138, Cys-66-Cys-103, Cys-73-Cys-97, and Cys-91-Cys-101. Ca(2+) contacts are provided by Tyr-43, Gly-45, and Gly-47. The active site involves His-63. Ca(2+) is bound at residue Asp-64. Asp-104 is a catalytic residue.

It belongs to the phospholipase A2 family. Group II subfamily. D49 sub-subfamily. Requires Ca(2+) as cofactor. As to expression, expressed by the venom gland.

The protein localises to the secreted. It carries out the reaction a 1,2-diacyl-sn-glycero-3-phosphocholine + H2O = a 1-acyl-sn-glycero-3-phosphocholine + a fatty acid + H(+). PLA2 catalyzes the calcium-dependent hydrolysis of the 2-acyl groups in 3-sn-phosphoglycerides. The polypeptide is Acidic phospholipase A2 PePLA2 (Protobothrops elegans (Elegant pitviper)).